Reading from the N-terminus, the 114-residue chain is Superoxide dismutase [Cu-Zn] (114 aa).

Positions 37, 39, and 54 each coordinate Cu cation. A disordered region spans residues M49–G73. Zn(2+) contacts are provided by H54, H62, H71, and D74. Residues R58–G73 are compositionally biased toward basic and acidic residues. H111 is a Cu cation binding site.

Belongs to the Cu-Zn superoxide dismutase family. Homodimer. It depends on Cu cation as a cofactor. Zn(2+) is required as a cofactor.

It localises to the cytoplasm. The catalysed reaction is 2 superoxide + 2 H(+) = H2O2 + O2. In terms of biological role, destroys radicals which are normally produced within the cells and which are toxic to biological systems. In Drosophila madeirensis (Fruit fly), this protein is Superoxide dismutase [Cu-Zn].